Here is a 1720-residue protein sequence, read N- to C-terminus: 182 kDa tankyrase-1-binding protein (1720 aa).

Positions 1-137 (MKGSTLREGT…PPLTPPARCA (137 aa)) are disordered. Ser-14 bears the Phosphoserine mark. Basic and acidic residues predominate over residues 117-127 (SGKEDAGKEDL). Residue Thr-131 is modified to Phosphothreonine. Phosphoserine is present on residues Ser-178 and Ser-220. Disordered regions lie at residues 185–472 (SRLT…ESNW) and 485–595 (RPSG…EDQE). The acidic stretch occupies residues 209 to 1563 (EEDSKSPAKG…TEILDSAMYR (1355 aa)). Residues 232–243 (QEEHSKTPEERN) show a composition bias toward basic and acidic residues. Position 238 is a phosphothreonine (Thr-238). Residues 266–287 (VSKTWVTSSADPVSEHGGSTSA) show a composition bias toward polar residues. 2 positions are modified to phosphoserine: Ser-286 and Ser-300. Residues 296–316 (PASESPRLSSRPSSPCHSQLS) show a composition bias toward low complexity. Polar residues predominate over residues 317 to 327 (ETQSPAASEAS). Residues Ser-429 and Ser-437 each carry the phosphoserine modification. The segment covering 449–459 (TLPQGQGSQSA) has biased composition (polar residues). Residues Ser-496 and Ser-500 each carry the phosphoserine modification. Low complexity predominate over residues 502–518 (ITEASEAAEAAEADSWA). 2 positions are modified to phosphothreonine: Thr-503 and Thr-533. A phosphoserine mark is found at Ser-539, Ser-568, Ser-602, Ser-673, Ser-692, and Ser-713. Disordered stretches follow at residues 659 to 720 (TTLP…CSEG), 734 to 924 (GVAT…EFEK), and 955 to 1081 (SGGG…GWAG). Low complexity predominate over residues 742-758 (SSFGSSSWSQDTSQNYS). Phosphoserine occurs at positions 763, 796, 807, 845, 866, 871, 876, 887, 912, 976, 980, 1006, 1017, and 1022. Residues 840 to 866 (FGKRESQDPHSIHDKELQDQEFGKRDS) are compositionally biased toward basic and acidic residues. The span at 991–1014 (FEKKTPVGEDRFCEASRDVGHLEE) shows a compositional bias: basic and acidic residues. The span at 1027–1039 (HSRDGAARPKDEG) shows a compositional bias: basic and acidic residues. Ser-1047, Ser-1063, Ser-1084, Ser-1096, Ser-1126, Ser-1131, Ser-1171, Ser-1212, Ser-1241, and Ser-1246 each carry phosphoserine. Positions 1128 to 1153 (AGLSPSRKSGGGHFVPPGETKAGAVD) are disordered. The tract at residues 1198–1255 (LARRLGTGESEEPRSLGVGEKDWTSSVEARNRDLPGQAEVGRHSQARESGVGEPDWSG) is disordered. Basic and acidic residues predominate over residues 1208–1230 (EEPRSLGVGEKDWTSSVEARNRD). Thr-1275 carries the phosphothreonine modification. Ser-1290, Ser-1321, Ser-1324, Ser-1373, and Ser-1375 each carry phosphoserine. The interval 1358–1546 (GRVGPDLELD…RGLLPSCPSE (189 aa)) is disordered. Positions 1402 to 1411 (EDSSSPSFET) are enriched in polar residues. A phosphoserine mark is found at Ser-1425, Ser-1429, Ser-1437, Ser-1440, Ser-1442, Ser-1463, and Ser-1466. A compositionally biased stretch (polar residues) spans 1428–1457 (ASPSSCLTRSPPSGSQSLLEGIMTASSSKG). A tankyrase-binding region spans residues 1440 to 1532 (SGSQSLLEGI…QNEQASAPPP (93 aa)). A compositionally biased stretch (low complexity) spans 1477–1489 (LAAGAGQGEPQEP). Ser-1496 carries the phosphoserine modification. Over residues 1515–1527 (WSLTGAARQNEQA) the composition is skewed to polar residues. Ser-1549 carries the phosphoserine modification. A Phosphothreonine modification is found at Thr-1554. The segment at 1567-1720 (NLGRKRGHRA…QALKLKKKKI (154 aa)) is disordered. Residues 1568–1577 (LGRKRGHRAP) are compositionally biased toward basic residues. The segment covering 1593 to 1606 (SDTRLFQDSTEPRA) has biased composition (basic and acidic residues). A phosphoserine mark is found at Ser-1611, Ser-1612, and Ser-1622. The Nuclear localization signal motif lies at 1620–1626 (PQSRRTR). Position 1635 is an N6-methyllysine (Lys-1635). Phosphoserine occurs at positions 1643 and 1657. A compositionally biased stretch (basic and acidic residues) spans 1656 to 1670 (RSAEEGEVTESKSSQ). Residues 1671-1690 (KESSVQRSKSCKVPGLGKPL) are compositionally biased toward low complexity. The residue at position 1706 (Ser-1706) is a Phosphoserine. The Nuclear localization signal signature appears at 1714–1719 (KLKKKK).

In terms of assembly, binds to the ANK repeat domain of TNKS1 and TNKS2. ADP-ribosylated by TNKS1.

The protein localises to the nucleus. It localises to the cytoplasm. The protein resides in the cytoskeleton. It is found in the chromosome. This chain is 182 kDa tankyrase-1-binding protein (Tnks1bp1), found in Mus musculus (Mouse).